The sequence spans 296 residues: Phosphoribosylaminoimidazole-succinocarboxamide synthase (296 aa).

It belongs to the SAICAR synthetase family.

The enzyme catalyses 5-amino-1-(5-phospho-D-ribosyl)imidazole-4-carboxylate + L-aspartate + ATP = (2S)-2-[5-amino-1-(5-phospho-beta-D-ribosyl)imidazole-4-carboxamido]succinate + ADP + phosphate + 2 H(+). It functions in the pathway purine metabolism; IMP biosynthesis via de novo pathway; 5-amino-1-(5-phospho-D-ribosyl)imidazole-4-carboxamide from 5-amino-1-(5-phospho-D-ribosyl)imidazole-4-carboxylate: step 1/2. This Thioalkalivibrio sulfidiphilus (strain HL-EbGR7) protein is Phosphoribosylaminoimidazole-succinocarboxamide synthase.